The primary structure comprises 409 residues: Accessory Sec system protein translocase subunit SecY2 (409 aa).

The next 10 helical transmembrane spans lie at 16-36, 61-81, 104-124, 132-152, 161-181, 190-210, 242-262, 286-306, 341-361, and 374-394; these read ILIT…PIPG, LSQV…MILL, VVML…FQYH, LLLA…IGNL, MTIL…PLIF, LAII…ITFE, GMAF…IILL, GVVI…FVNI, LFGT…LLFA, and TGIF…FQVI.

It belongs to the SecY/SEC61-alpha family. SecY2 subfamily. Component of the accessory SecA2/SecY2 protein translocase complex required to export cell wall proteins. May form heterotrimers with SecE and SecG subunits.

It is found in the cell membrane. Part of the accessory SecA2/SecY2 system specifically required for export of possible cell wall proteins. The central subunit of a protein translocation channel. This chain is Accessory Sec system protein translocase subunit SecY2, found in Streptococcus agalactiae serotype Ia (strain ATCC 27591 / A909 / CDC SS700).